A 381-amino-acid chain; its full sequence is Queuine tRNA-ribosyltransferase (381 aa).

Asp-96 (proton acceptor) is an active-site residue. Substrate is bound by residues 96–100, Asp-150, Gln-193, and Gly-220; that span reads DSGGF. The RNA binding stretch occupies residues 251–257; sequence GVGSPDS. Residue Asp-270 is the Nucleophile of the active site. Positions 275 to 279 are RNA binding; important for wobble base 34 recognition; the sequence is TRIAR. Positions 308, 310, 313, and 339 each coordinate Zn(2+).

This sequence belongs to the queuine tRNA-ribosyltransferase family. As to quaternary structure, homodimer. Within each dimer, one monomer is responsible for RNA recognition and catalysis, while the other monomer binds to the replacement base PreQ1. Requires Zn(2+) as cofactor.

The catalysed reaction is 7-aminomethyl-7-carbaguanine + guanosine(34) in tRNA = 7-aminomethyl-7-carbaguanosine(34) in tRNA + guanine. It participates in tRNA modification; tRNA-queuosine biosynthesis. Its function is as follows. Catalyzes the base-exchange of a guanine (G) residue with the queuine precursor 7-aminomethyl-7-deazaguanine (PreQ1) at position 34 (anticodon wobble position) in tRNAs with GU(N) anticodons (tRNA-Asp, -Asn, -His and -Tyr). Catalysis occurs through a double-displacement mechanism. The nucleophile active site attacks the C1' of nucleotide 34 to detach the guanine base from the RNA, forming a covalent enzyme-RNA intermediate. The proton acceptor active site deprotonates the incoming PreQ1, allowing a nucleophilic attack on the C1' of the ribose to form the product. After dissociation, two additional enzymatic reactions on the tRNA convert PreQ1 to queuine (Q), resulting in the hypermodified nucleoside queuosine (7-(((4,5-cis-dihydroxy-2-cyclopenten-1-yl)amino)methyl)-7-deazaguanosine). In Bacillus pumilus (strain SAFR-032), this protein is Queuine tRNA-ribosyltransferase.